The chain runs to 1218 residues: DNA polymerase subunit gamma-1 (1218 aa).

The tract at residues 31-50 (LDPVPSDGRPPSQMPSSENG) is disordered. The Exo I motif lies at 179–183 (VFDVE). Residue Asp181 is the Exonuclease activity of the active site. The Exo II motif lies at 250 to 258 (VGHNVSFDR). Ser289 provides a ligand contact to DNA. Residues 378–386 (YCARDVWAT) carry the Exo III motif. The tract at residues 484–524 (KKVKKPASASKLPIEGAGPFGDPMDQEDPGPPSEEEELQRS) is disordered. The segment at 492-553 (ASKLPIEGAG…RPQHLPGHPG (62 aa)) is accessory-interacting determinant. Over residues 507–520 (MDQEDPGPPSEEEE) the composition is skewed to acidic residues. Residue Arg561 participates in RNA binding. Position 575 (Ser575) interacts with DNA. RNA-binding residues include His733, Gly742, and Lys747. The DNA site is built by Lys785 and Thr828. The tract at residues 837–843 (TWLTASN) is trigger loop. RNA is bound by residues Ser842 and Arg848. The short motif at 866–875 (VGADVDSQEL) is the Pol A element. A 2'-deoxyribonucleoside 5'-triphosphate is bound by residues Asp869, Val870, Ser872, Glu874, Arg922, Lys926, and Tyr930. 2 residues coordinate Mg(2+): Asp869 and Val870. The short motif at 922-937 (REHAKIFNYGRIYGAG) is the Pol B element. DNA is bound by residues Thr1073 and Ser1074. The Pol C signature appears at 1113-1120 (HDEVRYLV). Asp1114 is an a 2'-deoxyribonucleoside 5'-triphosphate binding site. Asp1114 contributes to the Mg(2+) binding site.

Belongs to the DNA polymerase type-A family. Heterotrimer composed of a catalytic subunit and a homodimer of accessory subunits (POLG:POLG2). Interacts with TTC3. Interacts with LIG3. The cofactor is Mg(2+).

It localises to the mitochondrion. The protein resides in the mitochondrion matrix. The protein localises to the mitochondrion nucleoid. It carries out the reaction DNA(n) + a 2'-deoxyribonucleoside 5'-triphosphate = DNA(n+1) + diphosphate. The catalysed reaction is a 3'-end 2'-deoxyribonucleotidyl-deoxyribonucleotide-DNA + H2O = a 3'-end 2'-deoxyribonucleotide-DNA + a 2'-deoxyribonucleoside 5'-phosphate + H(+). The enzyme catalyses a 5'-end 2'-deoxyribose-2'-deoxyribonucleotide-DNA = (2E,4S)-4-hydroxypenten-2-al-5-phosphate + a 5'-end 5'-phospho-2'-deoxyribonucleoside-DNA + H(+). Its activity is regulated as follows. Inhibited by dideoxynucleotides such as antiviral agent zalcitabine. Functionally, catalytic subunit of DNA polymerase gamma solely responsible for replication of mitochondrial DNA (mtDNA). Replicates both heavy and light strands of the circular mtDNA genome using a single-stranded DNA template, RNA primers and the four deoxyribonucleoside triphosphates as substrates. Has 5' -&gt; 3' polymerase activity. Functionally interacts with TWNK and SSBP1 at the replication fork to form a highly processive replisome, where TWNK unwinds the double-stranded DNA template prior to replication and SSBP1 covers the parental heavy strand to enable continuous replication of the entire mitochondrial genome. A single nucleotide incorporation cycle includes binding of the incoming nucleotide at the insertion site, a phosphodiester bond formation reaction that extends the 3'-end of the primer DNA, and translocation of the primer terminus to the post-insertion site. After completing replication of a mtDNA strand, mediates 3' -&gt; 5' exonucleolytic degradation at the nick to enable proper ligation. Highly accurate due to high nucleotide selectivity and 3' -&gt; 5' exonucleolytic proofreading. Proficiently corrects base substitutions, single-base additions and deletions in non-repetitive sequences and short repeats, but displays lower proofreading activity when replicating longer homopolymeric stretches. Exerts exonuclease activity toward single-stranded DNA and double-stranded DNA containing 3'-terminal mispairs. When a misincorporation occurs, transitions from replication to a pro-nucleolytic editing mode and removes the missincorporated nucleoside in the exonuclease active site. Proceeds via an SN2 nucleolytic mechanism in which Asp-198 catalyzes phosphodiester bond hydrolysis and Glu-200 stabilizes the leaving group. As a result the primer strand becomes one nucleotide shorter and is positioned in the post-insertion site, ready to resume DNA synthesis. Exerts 5'-deoxyribose phosphate (dRP) lyase activity and mediates repair-associated mtDNA synthesis (gap filling) in base-excision repair pathway. Catalyzes the release of the 5'-terminal 2-deoxyribose-5-phosphate sugar moiety from incised apurinic/apyrimidinic (AP) sites to produce a substrate for DNA ligase. The dRP lyase reaction does not require divalent metal ions and likely proceeds via a Schiff base intermediate in a beta-elimination reaction mechanism. This chain is DNA polymerase subunit gamma-1, found in Mus musculus (Mouse).